Here is a 342-residue protein sequence, read N- to C-terminus: Tetraacyldisaccharide 4'-kinase (342 aa).

68–75 (TVGGTGKT) lines the ATP pocket.

The protein belongs to the LpxK family.

It catalyses the reaction a lipid A disaccharide + ATP = a lipid IVA + ADP + H(+). Its pathway is glycolipid biosynthesis; lipid IV(A) biosynthesis; lipid IV(A) from (3R)-3-hydroxytetradecanoyl-[acyl-carrier-protein] and UDP-N-acetyl-alpha-D-glucosamine: step 6/6. Its function is as follows. Transfers the gamma-phosphate of ATP to the 4'-position of a tetraacyldisaccharide 1-phosphate intermediate (termed DS-1-P) to form tetraacyldisaccharide 1,4'-bis-phosphate (lipid IVA). In Burkholderia cenocepacia (strain ATCC BAA-245 / DSM 16553 / LMG 16656 / NCTC 13227 / J2315 / CF5610) (Burkholderia cepacia (strain J2315)), this protein is Tetraacyldisaccharide 4'-kinase.